The sequence spans 133 residues: ATP synthase epsilon chain, chloroplastic (133 aa).

It belongs to the ATPase epsilon chain family. In terms of assembly, F-type ATPases have 2 components, CF(1) - the catalytic core - and CF(0) - the membrane proton channel. CF(1) has five subunits: alpha(3), beta(3), gamma(1), delta(1), epsilon(1). CF(0) has three main subunits: a, b and c.

The protein localises to the plastid. It is found in the chloroplast thylakoid membrane. Functionally, produces ATP from ADP in the presence of a proton gradient across the membrane. The chain is ATP synthase epsilon chain, chloroplastic from Nicotiana sylvestris (Wood tobacco).